The sequence spans 1029 residues: Toll-like receptor 9 (1029 aa).

A signal peptide spans 1-24; that stretch reads MGPYCAPHPLSLLVQAAALAAALA. Residues 25-815 are Extracellular-facing; the sequence is QGTLPAFLPC…LCLDETLSLD (791 aa). C34 and C44 are disulfide-bonded. 46-50 provides a ligand contact to DNA; the sequence is WLFLK. LRR repeat units follow at residues 61 to 84, 86 to 109, 121 to 146, 149 to 165, 166 to 189, 197 to 220, 222 to 241, 242 to 267, 282 to 305, 307 to 331, 332 to 355, 362 to 385, 389 to 412, 414 to 439, 469 to 492, 494 to 517, 518 to 541, 543 to 570, 572 to 596, 598 to 620, 625 to 648, 650 to 673, 674 to 697, 699 to 721, 722 to 745, and 747 to 770; these read RANV…DFVH, SNLR…HFPC, VPTL…SLVS, LSRT…FTGL, HALR…AVEV, LGNL…LPPS, DTLL…DLAN, LTAL…CREC, LSRL…WFRG, GRLQ…IFRN, LTQL…HLQL, LVSL…TLRP, LPKL…IFGA, PSLL…LGEV, CNLN…MFTR, SRLQ…QFVP, LTRL…SFTE, PQLE…SFVA, LPSL…LSSA, LRAL…LYLC, LRNL…HLDN, PKSL…SLTV, LPQL…SLPP, TRLQ…FFVL, ANRL…WFGR, and TETL…AFVD. N63 carries an N-linked (GlcNAc...) asparagine glycan. DNA-binding positions include 71–76 and 94–108; these read SNRIHH and KWNC…MHFP. Cysteines 97 and 109 form a disulfide. The N-linked (GlcNAc...) asparagine glycan is linked to N128. Residues Y131, R151, and 178 to 180 contribute to the DNA site; that span reads YYK. A disulfide bridge links C177 with C183. N199 carries an N-linked (GlcNAc...) asparagine glycan. Y207 serves as a coordination point for DNA. N-linked (GlcNAc...) asparagine glycosylation is found at N209 and N241. Disulfide bonds link C254-C267 and C257-C264. C257 carries S-palmitoyl cysteine lipidation. R261 is a DNA binding site. A lipid anchor (S-palmitoyl cysteine) is attached at C264. N331, N339, and N380 each carry an N-linked (GlcNAc...) asparagine glycan. C469 and C498 are oxidised to a cystine. 2 N-linked (GlcNAc...) asparagine glycosylation sites follow: N472 and N511. N565 carries an N-linked (GlcNAc...) asparagine glycan. N-linked (GlcNAc...) asparagine glycans are attached at residues N667 and N692. N729 carries an N-linked (GlcNAc...) asparagine glycan. 2 disulfides stabilise this stretch: C762–C788 and C764–C807. Residues 816–836 form a helical membrane-spanning segment; it reads CFGFSLLMVALGLAVPMLHHL. Over 837–1029 the chain is Cytoplasmic; sequence CGWDLWYCFH…NFCRGPTTAE (193 aa). The 146-residue stretch at 864 to 1009 folds into the TIR domain; the sequence is LLYDAFVVFD…SFWANLGMAL (146 aa).

It belongs to the Toll-like receptor family. As to quaternary structure, monomer and homodimer. Exists as a monomer in the absence of unmethylated cytidine-phosphate-guanosine (CpG) ligand. Proteolytic processing of an insertion loop (Z-loop) is required for homodimerization upon binding to the unmethylated CpG ligand leading to its activation. Interacts with MYD88 via their respective TIR domains. Interacts with BTK. Interacts (via transmembrane domain) with UNC93B1. Interacts with CD300LH; the interaction may promote full activation of TLR9-triggered innate responses. Interacts with CNPY3 and HSP90B1; this interaction is required for proper folding in the endoplasmic reticulum. Interacts with SMPDL3B. Interacts with CD82; this interaction is essential for TLR9-dependent myddosome formation in response to CpG stimulation. In terms of processing, activated by proteolytic cleavage of the flexible loop between repeats LRR14 and LRR15 within the ectodomain. Cleavage requires UNC93B1. Proteolytically processed by first removing the majority of the ectodomain by either asparagine endopeptidase (AEP) or a cathepsin followed by a trimming event that is solely cathepsin mediated and required for optimal receptor signaling. Post-translationally, palmitoylated by ZDHHC3 in the Golgi regulates TLR9 trafficking from the Golgi to endosomes. Depalmitoylation by PPT1 controls the release of TLR9 from UNC93B1 in endosomes.

Its subcellular location is the endoplasmic reticulum membrane. It localises to the endosome. The protein localises to the lysosome. It is found in the cytoplasmic vesicle. The protein resides in the phagosome. Key component of innate and adaptive immunity. TLRs (Toll-like receptors) control host immune response against pathogens through recognition of molecular patterns specific to microorganisms. TLR9 is a nucleotide-sensing TLR which is activated by unmethylated cytidine-phosphate-guanosine (CpG) dinucleotides. Acts via MYD88 and TRAF6, leading to NF-kappa-B activation, cytokine secretion and the inflammatory response. Upon CpG stimulation, induces B-cell proliferation, activation, survival and antibody production. This Ovis aries (Sheep) protein is Toll-like receptor 9 (TLR9).